The chain runs to 626 residues: MSLISAVPLASSCVSKSLISSVREHKALRRAIATLQMSRPGKSVAASTRMSSATAGCDDGVKRRIGDYHSNLWDDNFIQSLSSPYGASSYGDHADRLIGEVKEIFNSFSIADGELTSPVSDLLQQLWMVDNVERLGIDRHFQTEIKVALDNVYRYWSEKGIGCGRDSASTDLNTTALGFRIFRLHGYTVSSDAFEHFKDQMGQFTASANDTELQTRSVFNLFRASLIAFPEEKVLEEAEKFAAAYLKAALQTLPVSGLSREIKYVFDYRWHSNLPRLEARSYIDILADNTISGTPDANTKKLLELAKLEFNIFHSLQQKELQCLWRWWKEWGCPELTFIRHRYVEFYTLVSGIDMVPEHATFRLSFVKTCHLITILDDMYDTFGTIDELRLFTAAVKRWDPSATECLPEYMKGVYMVLYETVNEMAKEAQKSQGRDTLGYVRQALEDYIGSYLKEAEWIATGYVPTFQEYFENGKLSSGHRIATLQPILTLSIPFPHHILQEIDFPSKFNDYACSILRLRGDTRCYKADSARGEEASCTSCYMKENLGSTQEDALNHINGMIEDLIKKLNWEFLRPDNNAPISSKKHAFNISRGLHHFYNYRDGYSVASNETKDLVIKTVLEPVLM.

A chloroplast-targeting transit peptide spans 1–45 (MSLISAVPLASSCVSKSLISSVREHKALRRAIATLQMSRPGKSVA). The Mg(2+) site is built by Asp-377, Asp-381, and Asp-529. The DDXXD motif signature appears at 377-381 (DDMYD).

This sequence belongs to the terpene synthase family. Tpsd subfamily. Mg(2+) is required as a cofactor. It depends on Mn(2+) as a cofactor.

The protein resides in the plastid. Its subcellular location is the chloroplast. It catalyses the reaction (2E)-geranyl diphosphate = (+)-car-3-ene + diphosphate. The enzyme catalyses (2E)-geranyl diphosphate = terpinolene + diphosphate. The protein operates within terpene metabolism; oleoresin biosynthesis. Its pathway is secondary metabolite biosynthesis; terpenoid biosynthesis. Its function is as follows. Monoterpene synthase (TPS) involved in the biosynthesis of monoterpene natural products included in conifer oleoresin secretions and volatile emissions; these compounds contribute to biotic and abiotic stress defense against herbivores and pathogens. Catalyzes the conversion of (2E)-geranyl diphosphate (GPP) to (+)-3-carene and, to a lower extent, to terpinolene. In Pinus banksiana (Jack pine), this protein is (+)-3-carene synthase 1, chloroplastic.